The chain runs to 172 residues: Ribosome maturation factor RimP (172 aa).

Belongs to the RimP family.

It localises to the cytoplasm. Required for maturation of 30S ribosomal subunits. This chain is Ribosome maturation factor RimP, found in Chlorobium phaeovibrioides (strain DSM 265 / 1930) (Prosthecochloris vibrioformis (strain DSM 265)).